The primary structure comprises 56 residues: Large ribosomal subunit protein bL33 (56 aa).

This sequence belongs to the bacterial ribosomal protein bL33 family.

This is Large ribosomal subunit protein bL33 from Vibrio vulnificus (strain YJ016).